Here is a 268-residue protein sequence, read N- to C-terminus: Holocytochrome c-type synthase (268 aa).

Residues 1-22 (MGLSPSAPAVAVQASNASASPP) show a composition bias toward low complexity. A disordered region spans residues 1-25 (MGLSPSAPAVAVQASNASASPPSGC). The N-myristoyl glycine moiety is linked to residue G2. HRM repeat units follow at residues 24-29 (GCPMHE) and 34-39 (GCPVNT).

It belongs to the cytochrome c-type heme lyase family.

It is found in the mitochondrion inner membrane. The protein localises to the membrane. It catalyses the reaction holo-[cytochrome c] = apo-[cytochrome c] + heme b. Its function is as follows. Lyase that catalyzes the covalent linking of the heme group to the cytochrome C apoprotein to produce the mature functional cytochrome. This is Holocytochrome c-type synthase from Homo sapiens (Human).